Reading from the N-terminus, the 502-residue chain is Maturase K (502 aa).

This sequence belongs to the intron maturase 2 family. MatK subfamily.

It localises to the plastid. Its subcellular location is the chloroplast. In terms of biological role, usually encoded in the trnK tRNA gene intron. Probably assists in splicing its own and other chloroplast group II introns. The protein is Maturase K of Cephalotaxus fortunei (Chinese plum-yew).